We begin with the raw amino-acid sequence, 346 residues long: Ribonucleoside-diphosphate reductase subunit beta (346 aa).

Glu-89, Glu-120, and His-123 together coordinate Fe cation. The active site involves Tyr-129. 3 residues coordinate Fe cation: Glu-193, Glu-227, and His-230.

Belongs to the ribonucleoside diphosphate reductase small chain family. As to quaternary structure, tetramer of two alpha and two beta subunits. The cofactor is Fe cation.

The catalysed reaction is a 2'-deoxyribonucleoside 5'-diphosphate + [thioredoxin]-disulfide + H2O = a ribonucleoside 5'-diphosphate + [thioredoxin]-dithiol. Functionally, provides the precursors necessary for DNA synthesis. Catalyzes the biosynthesis of deoxyribonucleotides from the corresponding ribonucleotides. This chain is Ribonucleoside-diphosphate reductase subunit beta (nrdB), found in Chlamydia pneumoniae (Chlamydophila pneumoniae).